The chain runs to 148 residues: Large ribosomal subunit protein bL9 (148 aa).

Belongs to the bacterial ribosomal protein bL9 family.

Its function is as follows. Binds to the 23S rRNA. The protein is Large ribosomal subunit protein bL9 of Methylobacillus flagellatus (strain ATCC 51484 / DSM 6875 / VKM B-1610 / KT).